A 361-amino-acid chain; its full sequence is RuBisCO accumulation factor 1 (361 aa).

The tract at residues Asn16–Asp197 is N-terminal alpha-helix. Positions Pro221–Ile347 are C-terminal beta-sheet.

It belongs to the RAF family. Homodimer. Forms an RbcL(8)-Raf1(8) complex. Each Raf1 dimer clamps the exterior of an RbcL dimer, protecting it. The extreme C-terminus (residues 354-361) inserts into the catalytic pocket of RbcL where the Glu-361 forms a salt bridge with 'Lys-202'. This insertion probably contributes to the assembly of RbcL(8). Forms complexes of many stoichiometries with RbcL with and without RbcS. RbcX and Raf1 can bind simultaneously to RbcL.

It is found in the cytoplasm. Its function is as follows. A major RuBisCO chaperone. Acts after GroEL-GroES chaperonin to fold and/or assemble the large subunit of RuBisCO (ccbL, rbcL). Cooperates with RbcX in RbcL folding, plays the major role in assembly of dimers into RbcL(8)-Raf1(8) intermediate complexes. RbcS replaces Raf1, leading to holoenzyme formation. In vitro acts as an antagonist to CcmM35, suggesting it might regulate RuBisCO condensation and decondensation. This Nostoc sp. (strain PCC 7120 / SAG 25.82 / UTEX 2576) protein is RuBisCO accumulation factor 1.